The chain runs to 205 residues: Small ribosomal subunit protein uS4 (205 aa).

The span at M1–G16 shows a compositional bias: basic and acidic residues. Positions M1–S46 are disordered. In terms of domain architecture, S4 RNA-binding spans S94–V157.

The protein belongs to the universal ribosomal protein uS4 family. In terms of assembly, part of the 30S ribosomal subunit. Contacts protein S5. The interaction surface between S4 and S5 is involved in control of translational fidelity.

Functionally, one of the primary rRNA binding proteins, it binds directly to 16S rRNA where it nucleates assembly of the body of the 30S subunit. Its function is as follows. With S5 and S12 plays an important role in translational accuracy. The protein is Small ribosomal subunit protein uS4 of Rhizobium johnstonii (strain DSM 114642 / LMG 32736 / 3841) (Rhizobium leguminosarum bv. viciae).